The sequence spans 468 residues: MSSGTLYDKVWDLHRVAELSGGSTQLLIGLHLIHEVTSPQAFVALEDKGLKVRCPERTVATVDHIVPTTNQARPFADPLAEEMLSTLERNCSKHGIVLNGIGSGRQGIVHVIAPELGLTQPGMTVACGDSHTSTHGAFGAIAFGIGTSQVRDVLASQSLAMNKLKVRRLWFDNQLSPGVFAKDLILHVIRSLGVKAGVGHAYEFAGPAIDALSMEERMTLCNMAIEGGARCGYVNPDQTTFDYLKGRPSVPSGGAWNRATRWWRSLASNADAVFDDELRFDAATISPTVTWGITPGQGIGVDEQVPTPEQLDPADRPIAEEAYRYMDLTPGQAIAGVPVDVCFIGSCTNGRLSDLKAAAAVARGRQVAAGIKAFVVPGSEQVARAAEAEGLDQVFRDAGFEWREPGCSMCLAMNPDRLEGRQISASSSNRNFKGRQGSASGRTLLMSPAMVAAAAVTGYVSDVRSLGD.

Residues Cys-347, Cys-407, and Cys-410 each contribute to the [4Fe-4S] cluster site.

Belongs to the aconitase/IPM isomerase family. LeuC type 1 subfamily. Heterodimer of LeuC and LeuD. [4Fe-4S] cluster is required as a cofactor.

It catalyses the reaction (2R,3S)-3-isopropylmalate = (2S)-2-isopropylmalate. It functions in the pathway amino-acid biosynthesis; L-leucine biosynthesis; L-leucine from 3-methyl-2-oxobutanoate: step 2/4. Functionally, catalyzes the isomerization between 2-isopropylmalate and 3-isopropylmalate, via the formation of 2-isopropylmaleate. In Synechococcus sp. (strain CC9311), this protein is 3-isopropylmalate dehydratase large subunit.